The following is a 371-amino-acid chain: Regulatory protein RapK (371 aa).

TPR repeat units lie at residues 7–42 (EVVATTLNDWYIAIKKQKVDESIKYYSEIKKLFDEM), 93–130 (EYNFYLFEAMYEAYNKNYDRAINLYGLAEKKLAEIPDE), 175–208 (ATSTMIAAANYADMKRFEEAEQYYLEAIDIAKET), 215–248 (AQLFHNLSIVYSDWNKPDKCIESLEKAIGNESWL), 254–290 (INSLFMMIKELFKIDEKMKAINFYNKAQERLILMENK), and 331–364 (DELSYIAAKRFESIGAFEEATSFFNAKIWAEQKM).

It belongs to the Rap family.

It localises to the cytoplasm. Its activity is regulated as follows. Inhibited by PhrK, which prevents RapK-ComA interaction. Involved in the regulation of genetic competence development. Inhibits the activity of ComA, a transcriptional factor that regulates the development of genetic competence. Likely affects the activity of additional regulators, in particular Spo0A. The polypeptide is Regulatory protein RapK (rapK) (Bacillus subtilis (strain 168)).